Consider the following 412-residue polypeptide: Multidrug resistance protein MdtG (412 aa).

Helical transmembrane passes span 19–39 (LGCFLTGAAFSLVMPFLPLYV), 56–76 (LVFSITFLFSAIASPFWGGLA), 90–110 (LGMSVVMMLMGMAQNIWQFLL), 113–133 (ALLGLLGGFIPNANALIATQI), 144–164 (TLSTGAVSGALLGPLAGGFLA), 171–191 (TVFFMTAAVLFICFLFTLFLI), 222–242 (LFVTSLIIQVATGSIAPILTL), 254–274 (IAFISGMIASVPGIAALMSAP), 288–308 (ILIVALIISVLLLIPMSFVQT), 317–337 (FLLGAADGALLPAVQTLLVYN), and 376–396 (AVFLVTAGVVLFNAIYSTLSL).

The protein belongs to the major facilitator superfamily. DHA1 family. MdtG (TC 2.A.1.2.20) subfamily.

The protein resides in the cell inner membrane. This is Multidrug resistance protein MdtG from Klebsiella pneumoniae (strain 342).